The following is a 385-amino-acid chain: GTPase Obg (385 aa).

The 159-residue stretch at 1-159 (MHFIDQAEIE…RRLRLELKLI (159 aa)) folds into the Obg domain. Residues 160 to 328 (AEVGIVGMPN…LLQRVWQCLG (169 aa)) form the OBG-type G domain. Residues 166-173 (GMPNAGKS), 191-195 (FTTLQ), 213-216 (DIPG), 280-283 (NKID), and 309-311 (SAV) each bind GTP. Mg(2+)-binding residues include Ser-173 and Thr-193.

It belongs to the TRAFAC class OBG-HflX-like GTPase superfamily. OBG GTPase family. As to quaternary structure, monomer. Mg(2+) is required as a cofactor.

The protein localises to the cytoplasm. Functionally, an essential GTPase which binds GTP, GDP and possibly (p)ppGpp with moderate affinity, with high nucleotide exchange rates and a fairly low GTP hydrolysis rate. Plays a role in control of the cell cycle, stress response, ribosome biogenesis and in those bacteria that undergo differentiation, in morphogenesis control. The chain is GTPase Obg from Synechococcus sp. (strain JA-3-3Ab) (Cyanobacteria bacterium Yellowstone A-Prime).